The primary structure comprises 140 residues: Beta/delta-urticatoxin-De2a (140 aa).

The N-terminal stretch at 1 to 18 (MKTSTALVLLLALTATSA) is a signal peptide. The propeptide occupies 19–78 (SSGDHQFIDEQNIMNVAEGKNVISSLSSSGGGDDAAAIMESVLVNGGNRKMVFMMVSGSQ). Cystine bridges form between Cys81–Cys95, Cys88–Cys100, Cys94–Cys108, Cys113–Cys127, Cys120–Cys131, and Cys126–Cys139.

It belongs to the urticatoxin-2 family. As to expression, expressed in trichomes, that are stiff epidermal hairs located on the surface of petioles and leaves.

The protein resides in the secreted. In terms of biological role, plant defense neurotoxin that causes pain and systemic symptoms in mammals via modulation of voltage-gated sodium channels (Nav). Potent modulator of human Nav1.5/SCN5A (EC(50)=55 nM), Nav1.6/SCN8A (EC(50)=0.86 nM), and Nav1.7/SCN9A (EC(50)=208 nM), where it shifts the activation threshold to more negative potentials and delays fast inactivation. Also shifts the voltage-dependence of steady-state fast inactivation of Nav1.6/SCN8A, but not that of Nav1.5/SCN5A or Nav1.7/SCN9A. On Nav1.7/SCN9A, principally acts by binding to extracellular loops of domain IV (Nav site 3). In vivo, intraplantar injection into mice causes numerous dose-dependent, immediate, and long-lasting spontaneous pain behaviors, while no swelling is observed in the injected paw. At the highest doses tested, systemic symptoms including hypokinesia and hypersalivation are observed. The chain is Beta/delta-urticatoxin-De2a from Dendrocnide excelsa (Giant stinging tree).